The primary structure comprises 350 residues: Probable poly-beta-1,6-N-acetyl-D-glucosamine export protein (350 aa).

Helical transmembrane passes span 8–28 (LVYL…LTQI), 40–60 (LVLQ…FIIL), 83–103 (YILI…SLLT), 119–139 (QWYG…YIIF), 146–166 (FNSK…LYYF), 182–202 (LSEN…AYMG), 216–236 (LVIM…LANG), 254–274 (IMFI…FNTI), 276–296 (MISA…DSLF), and 308–328 (VFLA…GMIL).

It belongs to the acyltransferase 3 family.

The protein resides in the cell membrane. Functionally, presumably involved in the export of the biofilm adhesin polysaccharide poly-beta-1,6-N-acetyl-D-glucosamine (PNAG, also referred to as PIA) across the cell membrane. In Staphylococcus aureus (strain NCTC 8325 / PS 47), this protein is Probable poly-beta-1,6-N-acetyl-D-glucosamine export protein (icaC).